Here is a 663-residue protein sequence, read N- to C-terminus: Pyoverdine export ATP-binding/permease protein PvdT (663 aa).

One can recognise an ABC transporter domain in the interval 11-250 (IELRDIRKRY…PSAGVERHLQ (240 aa)). 48-55 (GASGSGKS) contacts ATP. The next 4 membrane-spanning stretches (helical) occupy residues 292–312 (ALTLLGIIIGVASVVVMLAVG), 545–565 (IAAISLLVGGIGVMNIMLMTV), 598–618 (VVGGLAGIALALCIGGVLLLG), and 626–646 (LSAIVGAFSCALVTGLVFGFM).

This sequence belongs to the ABC transporter superfamily. Macrolide exporter (TC 3.A.1.122) family. In terms of assembly, part of the tripartite efflux system PvdRT-OpmQ, which is composed of an inner membrane component with both ATPase and permease domains, PvdT, a periplasmic membrane fusion protein, PvdR, and an outer membrane component, OpmQ.

The protein resides in the cell inner membrane. Functionally, part of the tripartite efflux system PvdRT-OpmQ required for the secretion into the extracellular milieu of the siderophore pyoverdine (PVD), which is involved in iron acquisition. This subunit binds PVD and drives its secretion by hydrolyzing ATP. The system is responsible for export of newly synthesized PVD after the final steps of biosynthesis have taken place in the periplasm. It is also responsible for recycling of PVD after internalization of ferri-PVD into the periplasm by the outer-membrane receptor FpvA and release of iron from PVD, thus making PVD available for new cycles of iron uptake. In addition, can expel unwanted metals complexed with PVD from the periplasm into the extracellular medium. The protein is Pyoverdine export ATP-binding/permease protein PvdT of Pseudomonas aeruginosa (strain ATCC 15692 / DSM 22644 / CIP 104116 / JCM 14847 / LMG 12228 / 1C / PRS 101 / PAO1).